The primary structure comprises 436 residues: GTPase Der (436 aa).

EngA-type G domains follow at residues 4-167 (PVVA…KDEE) and 176-351 (IKLS…ENHK). Residues 10–17 (GRPNVGKS), 57–61 (DTGGI), 119–122 (NKVD), 182–189 (GRPNVGKS), 229–233 (DTAGM), and 294–297 (NKWD) contribute to the GTP site. One can recognise a KH-like domain in the interval 352–436 (KRVQSSTLNE…PIRIIPRKRN (85 aa)).

The protein belongs to the TRAFAC class TrmE-Era-EngA-EngB-Septin-like GTPase superfamily. EngA (Der) GTPase family. In terms of assembly, associates with the 50S ribosomal subunit.

GTPase that plays an essential role in the late steps of ribosome biogenesis. The sequence is that of GTPase Der from Staphylococcus carnosus (strain TM300).